The sequence spans 550 residues: Eukaryotic translation initiation factor 3 subunit D-2 (550 aa).

The tract at residues 108–152 (RTRGRTGRGTPNIASLGGSTAGGATASTTKYGKGRHTRNTQNVGR) is disordered. The span at 115-136 (RGTPNIASLGGSTAGGATASTT) shows a compositional bias: low complexity. An RNA gate region spans residues 290 to 304 (QFDLLTVNETSVEPP). The interval 527–550 (PENAFDSDRDEEESSEPLSNSNDN) is disordered.

Belongs to the eIF-3 subunit D family. Component of the eukaryotic translation initiation factor 3 (eIF-3) complex. The eIF-3 complex interacts with pix.

It is found in the cytoplasm. Its function is as follows. mRNA cap-binding component of the eukaryotic translation initiation factor 3 (eIF-3) complex, which is involved in protein synthesis of a specialized repertoire of mRNAs and, together with other initiation factors, stimulates binding of mRNA and methionyl-tRNAi to the 40S ribosome. The eIF-3 complex specifically targets and initiates translation of a subset of mRNAs involved in cell proliferation. In the eIF-3 complex, eif3d specifically recognizes and binds the 7-methylguanosine cap of a subset of mRNAs. The sequence is that of Eukaryotic translation initiation factor 3 subunit D-2 from Drosophila sechellia (Fruit fly).